The sequence spans 616 residues: Schwannomin-interacting protein 1 homolog (616 aa).

Over residues Glu-38–Pro-50 the composition is skewed to acidic residues. Disordered regions lie at residues Glu-38–Ser-71, Leu-204–Phe-251, and Ser-292–Gln-320. Composition is skewed to polar residues over residues Ser-62–Ser-71 and Leu-204–Thr-217. Positions Leu-550–Asn-594 form a coiled coil.

It belongs to the SCHIP1 family. As to quaternary structure, interacts with ex; the interaction results in recruitment of Schip1 to the apical cell membrane. Interacts with Tao; the interaction enhances Tao kinase activity. Interacts with Mer. As to expression, in eye disks of the third instar larvae, expressed in all cells (at protein level).

Its subcellular location is the cell junction. The protein resides in the adherens junction. It is found in the apical cell membrane. In terms of biological role, regulator of the Hippo/SWH (Sav/Wts/Hpo) signaling pathway, a signaling pathway that plays a pivotal role in organ size control and tumor suppression by restricting proliferation and promoting apoptosis. The core of this pathway is composed of a kinase cascade wherein Hippo (hpo), in complex with its regulatory protein Salvador (sav), phosphorylates and activates Warts (wts) in complex with its regulatory protein Mats, which in turn phosphorylates and inactivates the Yorkie (yki) oncoprotein. Schip1 promotes kinase activity of Tao and enhances phosphorylation of hpo by Tao. This Drosophila melanogaster (Fruit fly) protein is Schwannomin-interacting protein 1 homolog.